The primary structure comprises 310 residues: Olfactory receptor 2A14 (310 aa).

The Extracellular segment spans residues 1 to 24; the sequence is MEGNKTWITDITLPRFQVGPALEI. N-linked (GlcNAc...) asparagine glycosylation is present at N4. Residues 25–48 traverse the membrane as a helical segment; it reads LLCGLFSAFYTLTLLGNGVIFGII. The Cytoplasmic segment spans residues 49–56; sequence CLDCKLHT. The chain crosses the membrane as a helical span at residues 57–78; the sequence is PMYFFLSHLAIVDISYASNYVP. The Extracellular segment spans residues 79–99; it reads KMLTNLMNQESTISFFPCIMQ. Residues C96 and C188 are joined by a disulfide bond. A helical transmembrane segment spans residues 100-119; the sequence is TFLYLAFAHVECLILVVMSY. At 120-138 the chain is on the cytoplasmic side; sequence DRYADICHPLRYNSLMSWR. Residues 139–157 form a helical membrane-spanning segment; it reads VCTVLAVASWVFSFLLALV. Residues 158–194 lie on the Extracellular side of the membrane; the sequence is PLVLILSLPFCGPHEINHFFCEILSVLKLACADTWLN. Residues 195–218 form a helical membrane-spanning segment; that stretch reads QVVIFAACVFILVGPLCLVLVSYL. The Cytoplasmic portion of the chain corresponds to 219-235; it reads RILAAILRIQSGEGRRK. A helical transmembrane segment spans residues 236–258; the sequence is AFSTCSSHLCVVGLFFGSAIVTY. Topologically, residues 259–271 are extracellular; it reads MAPKSRHPEEQQK. The helical transmembrane segment at 272–291 threads the bilayer; the sequence is VLSLFYSLFNPMLNPLIYSL. The Cytoplasmic segment spans residues 292–310; sequence RNAEVKGALRRALRKERLT.

It belongs to the G-protein coupled receptor 1 family.

It localises to the cell membrane. In terms of biological role, odorant receptor. This is Olfactory receptor 2A14 (OR2A14) from Homo sapiens (Human).